Reading from the N-terminus, the 241-residue chain is Methylthioribulose-1-phosphate dehydratase (241 aa).

Polar residues predominate over residues 1 to 17; the sequence is MAKQVENNNNDHLVQST. Residues 1–21 form a disordered region; that stretch reads MAKQVENNNNDHLVQSTDPEH. Substrate is bound at residue Cys-100. Residues His-117 and His-119 each coordinate Zn(2+). Catalysis depends on Glu-146, which acts as the Proton donor/acceptor. His-202 is a binding site for Zn(2+).

Belongs to the aldolase class II family. MtnB subfamily. Zn(2+) serves as cofactor.

It localises to the cytoplasm. It carries out the reaction 5-(methylsulfanyl)-D-ribulose 1-phosphate = 5-methylsulfanyl-2,3-dioxopentyl phosphate + H2O. The protein operates within amino-acid biosynthesis; L-methionine biosynthesis via salvage pathway; L-methionine from S-methyl-5-thio-alpha-D-ribose 1-phosphate: step 2/6. Its function is as follows. Catalyzes the dehydration of methylthioribulose-1-phosphate (MTRu-1-P) into 2,3-diketo-5-methylthiopentyl-1-phosphate (DK-MTP-1-P). The chain is Methylthioribulose-1-phosphate dehydratase from Aspergillus flavus (strain ATCC 200026 / FGSC A1120 / IAM 13836 / NRRL 3357 / JCM 12722 / SRRC 167).